The following is a 29-amino-acid chain: Cytochrome b6-f complex subunit 8 (29 aa).

A helical transmembrane segment spans residues 3 to 23; sequence TVSIAWAALMVIFTFSISLVV.

It belongs to the PetN family. In terms of assembly, the 4 large subunits of the cytochrome b6-f complex are cytochrome b6, subunit IV (17 kDa polypeptide, PetD), cytochrome f and the Rieske protein, while the 4 small subunits are PetG, PetL, PetM and PetN. The complex functions as a dimer.

Its subcellular location is the plastid. The protein localises to the chloroplast thylakoid membrane. Component of the cytochrome b6-f complex, which mediates electron transfer between photosystem II (PSII) and photosystem I (PSI), cyclic electron flow around PSI, and state transitions. The sequence is that of Cytochrome b6-f complex subunit 8 from Psilotum nudum (Whisk fern).